A 228-amino-acid polypeptide reads, in one-letter code: Carboxylesterase SOBER1 (228 aa).

Catalysis depends on charge relay system residues serine 106, aspartate 160, and histidine 192.

Belongs to the AB hydrolase superfamily. AB hydrolase 2 family.

Functionally, possesses carboxylesterase activity in vitro with a preference for short acyl chain substrates. Functions as a negative regulator of the hypersensitive response (HR) triggered by the bacterial type III effector protein AvrBsT. Possesses phospholipase A2 (PLA2) activity and hydrolyzes phosphatidylcholine (PC), a lipid that is hydrolyzed by phospholipase D (PLD) to produce phosphatidic acid (PA). Required to suppress AvrBsT-dependent HR and PLD-dependent production of PA in response to AvrBsT elicitation. The sequence is that of Carboxylesterase SOBER1 from Arabidopsis thaliana (Mouse-ear cress).